The following is a 435-amino-acid chain: Probable exopolygalacturonase X (435 aa).

Positions 1–22 (MRLTHVLSHTLGLLALGATAEA) are cleaved as a signal peptide. Residues 31-55 (CSPKKPFRPLPTSSSRDKTCHVRSH) form a disordered region. Over residues 45–55 (SRDKTCHVRSH) the composition is skewed to basic and acidic residues. N-linked (GlcNAc...) asparagine glycans are attached at residues asparagine 93, asparagine 112, asparagine 128, and asparagine 198. PbH1 repeat units follow at residues 199 to 229 (SSNV…DTYR) and 230 to 251 (SNNI…SFKP). Residue aspartate 244 is the Proton donor of the active site. A disulfide bridge links cysteine 246 with cysteine 263. Residues asparagine 252 and asparagine 264 are each glycosylated (N-linked (GlcNAc...) asparagine). One copy of the PbH1 3 repeat lies at 253–273 (STNILVQNLHCNGSHGISVGS). Histidine 267 is an active-site residue. 4 N-linked (GlcNAc...) asparagine glycosylation sites follow: asparagine 291, asparagine 296, asparagine 328, and asparagine 353. A PbH1 4 repeat occupies 326–347 (VKNITYDTALIDNVDWAIEITQ). A PbH1 5 repeat occupies 361-409 (PSSLTISDVHIKNFRGTTSGSEDPYVGTIVCSSPDTCSDIYTSNINVTS). The cysteines at positions 391 and 397 are disulfide-linked. Residues asparagine 406 and asparagine 429 are each glycosylated (N-linked (GlcNAc...) asparagine).

It belongs to the glycosyl hydrolase 28 family.

It localises to the secreted. The enzyme catalyses [(1-&gt;4)-alpha-D-galacturonosyl](n) + H2O = alpha-D-galacturonate + [(1-&gt;4)-alpha-D-galacturonosyl](n-1). In terms of biological role, specific in hydrolyzing the terminal glycosidic bond of polygalacturonic acid and oligogalacturonates. This chain is Probable exopolygalacturonase X (pgaX), found in Aspergillus niger (strain ATCC MYA-4892 / CBS 513.88 / FGSC A1513).